Here is a 332-residue protein sequence, read N- to C-terminus: Methionine synthase (332 aa).

His-211, Cys-213, and Cys-296 together coordinate Zn(2+).

It belongs to the archaeal MetE family. Zn(2+) is required as a cofactor.

The protein operates within amino-acid biosynthesis; L-methionine biosynthesis via de novo pathway. Functionally, catalyzes the transfer of a methyl group to L-homocysteine resulting in methionine formation. The physiological methyl donor is unknown. The chain is Methionine synthase from Saccharolobus solfataricus (strain ATCC 35092 / DSM 1617 / JCM 11322 / P2) (Sulfolobus solfataricus).